Here is a 185-residue protein sequence, read N- to C-terminus: Adenine phosphoribosyltransferase (185 aa).

This sequence belongs to the purine/pyrimidine phosphoribosyltransferase family. In terms of assembly, homodimer.

It is found in the cytoplasm. The catalysed reaction is AMP + diphosphate = 5-phospho-alpha-D-ribose 1-diphosphate + adenine. The protein operates within purine metabolism; AMP biosynthesis via salvage pathway; AMP from adenine: step 1/1. In terms of biological role, catalyzes a salvage reaction resulting in the formation of AMP, that is energically less costly than de novo synthesis. The polypeptide is Adenine phosphoribosyltransferase (Kineococcus radiotolerans (strain ATCC BAA-149 / DSM 14245 / SRS30216)).